The chain runs to 129 residues: Lysozyme C (129 aa).

The region spanning 1-129 is the C-type lysozyme domain; that stretch reads KVYGRCELAA…VNAWTRGCRL (129 aa). Disulfide bonds link Cys6–Cys127, Cys30–Cys115, Cys64–Cys80, and Cys76–Cys94. Catalysis depends on residues Glu35 and Asp52.

It belongs to the glycosyl hydrolase 22 family. Monomer.

The protein localises to the secreted. It carries out the reaction Hydrolysis of (1-&gt;4)-beta-linkages between N-acetylmuramic acid and N-acetyl-D-glucosamine residues in a peptidoglycan and between N-acetyl-D-glucosamine residues in chitodextrins.. Its function is as follows. Lysozymes have primarily a bacteriolytic function; those in tissues and body fluids are associated with the monocyte-macrophage system and enhance the activity of immunoagents. This chain is Lysozyme C (LYZ), found in Chrysolophus amherstiae (Lady Amherst's pheasant).